Consider the following 107-residue polypeptide: Late histone H2B.L4 (107 aa).

A glycan (O-linked (GlcNAc) serine) is linked at serine 94. Residue lysine 102 forms a Glycyl lysine isopeptide (Lys-Gly) (interchain with G-Cter in ubiquitin) linkage.

This sequence belongs to the histone H2B family. In terms of assembly, the nucleosome is a histone octamer containing two molecules each of H2A, H2B, H3 and H4 assembled in one H3-H4 heterotetramer and two H2A-H2B heterodimers. The octamer wraps approximately 147 bp of DNA. Monoubiquitination gives a specific tag for epigenetic transcriptional activation and is also prerequisite for histone H3 'Lys-4' and 'Lys-79' methylation. Post-translationally, glcNAcylation at Ser-94 promotes monoubiquitination of Lys-102. It fluctuates in response to extracellular glucose, and associates with transcribed genes.

The protein resides in the nucleus. The protein localises to the chromosome. Core component of nucleosome. Nucleosomes wrap and compact DNA into chromatin, limiting DNA accessibility to the cellular machineries which require DNA as a template. Histones thereby play a central role in transcription regulation, DNA repair, DNA replication and chromosomal stability. DNA accessibility is regulated via a complex set of post-translational modifications of histones, also called histone code, and nucleosome remodeling. The polypeptide is Late histone H2B.L4 (Strongylocentrotus purpuratus (Purple sea urchin)).